Reading from the N-terminus, the 212-residue chain is Inner membrane-spanning protein YciB (212 aa).

6 helical membrane-spanning segments follow: residues 19–39, 47–67, 82–102, 105–122, 147–167, and 177–197; these read FYGALPPEWILAVGVWLPVAL, AIYLATAVAMVVMAVQLALGL, AVILVLGGATLWLHDPVFILW, TLVNWLFALVFMAPPLFG, LAWVVFFLVSGLANLFVAYTF, and LFGMLGMTFVFVIGQAVYLGL.

This sequence belongs to the YciB family.

It localises to the cell inner membrane. Functionally, plays a role in cell envelope biogenesis, maintenance of cell envelope integrity and membrane homeostasis. The chain is Inner membrane-spanning protein YciB from Thioalkalivibrio sulfidiphilus (strain HL-EbGR7).